We begin with the raw amino-acid sequence, 494 residues long: Chromosomal replication initiator protein DnaA (494 aa).

Residues 1 to 103 (MTTDPDPPFV…PVSDESDSGS (103 aa)) form a domain I, interacts with DnaA modulators region. Residues 94–117 (PVSDESDSGSVASPAPVAAADPDD) are disordered. The span at 101–113 (SGSVASPAPVAAA) shows a compositional bias: low complexity. The interval 104–153 (VASPAPVAAADPDDDVVDDDLAARASAEESWPSYFTNRANRAAEDDATSV) is domain II. The interval 154–370 (NLNRRYTFDT…GALIRVTAFA (217 aa)) is domain III, AAA+ region. The ATP site is built by G198, G200, K201, and T202. The interval 371–494 (SLNKTPIDKS…TTRIRQRAKR (124 aa)) is domain IV, binds dsDNA.

Belongs to the DnaA family. In terms of assembly, oligomerizes as a right-handed, spiral filament on DNA at oriC.

The protein localises to the cytoplasm. Functionally, plays an essential role in the initiation and regulation of chromosomal replication. ATP-DnaA binds to the origin of replication (oriC) to initiate formation of the DNA replication initiation complex once per cell cycle. Binds the DnaA box (a 9 base pair repeat at the origin) and separates the double-stranded (ds)DNA. Forms a right-handed helical filament on oriC DNA; dsDNA binds to the exterior of the filament while single-stranded (ss)DNA is stabiized in the filament's interior. The ATP-DnaA-oriC complex binds and stabilizes one strand of the AT-rich DNA unwinding element (DUE), permitting loading of DNA polymerase. After initiation quickly degrades to an ADP-DnaA complex that is not apt for DNA replication. Binds acidic phospholipids. This is Chromosomal replication initiator protein DnaA from Mycolicibacterium vanbaalenii (strain DSM 7251 / JCM 13017 / BCRC 16820 / KCTC 9966 / NRRL B-24157 / PYR-1) (Mycobacterium vanbaalenii).